A 359-amino-acid chain; its full sequence is Phospho-N-acetylmuramoyl-pentapeptide-transferase (359 aa).

10 consecutive transmembrane segments (helical) span residues Gln-3–Ile-23, Gly-53–Ile-73, Gly-84–Ile-104, Thr-117–Phe-137, Ile-156–Ala-176, Leu-187–Phe-207, Leu-231–Ala-251, Ile-255–Thr-275, Val-283–Phe-303, and Val-330–Tyr-350.

It belongs to the glycosyltransferase 4 family. MraY subfamily. The cofactor is Mg(2+).

It localises to the cell membrane. The catalysed reaction is UDP-N-acetyl-alpha-D-muramoyl-L-alanyl-gamma-D-glutamyl-meso-2,6-diaminopimeloyl-D-alanyl-D-alanine + di-trans,octa-cis-undecaprenyl phosphate = di-trans,octa-cis-undecaprenyl diphospho-N-acetyl-alpha-D-muramoyl-L-alanyl-D-glutamyl-meso-2,6-diaminopimeloyl-D-alanyl-D-alanine + UMP. It functions in the pathway cell wall biogenesis; peptidoglycan biosynthesis. Functionally, catalyzes the initial step of the lipid cycle reactions in the biosynthesis of the cell wall peptidoglycan: transfers peptidoglycan precursor phospho-MurNAc-pentapeptide from UDP-MurNAc-pentapeptide onto the lipid carrier undecaprenyl phosphate, yielding undecaprenyl-pyrophosphoryl-MurNAc-pentapeptide, known as lipid I. This Rhodococcus jostii (strain RHA1) protein is Phospho-N-acetylmuramoyl-pentapeptide-transferase.